Consider the following 917-residue polypeptide: Protein translocase subunit SecA (917 aa).

Residues Gln87, 105-109, and Asp516 contribute to the ATP site; that span reads GEGKT. Residues Cys901, Cys903, Cys912, and His913 each contribute to the Zn(2+) site.

It belongs to the SecA family. Monomer and homodimer. Part of the essential Sec protein translocation apparatus which comprises SecA, SecYEG and auxiliary proteins SecDF-YajC and YidC. Zn(2+) is required as a cofactor.

The protein localises to the cell inner membrane. The protein resides in the cytoplasm. The enzyme catalyses ATP + H2O + cellular proteinSide 1 = ADP + phosphate + cellular proteinSide 2.. Functionally, part of the Sec protein translocase complex. Interacts with the SecYEG preprotein conducting channel. Has a central role in coupling the hydrolysis of ATP to the transfer of proteins into and across the cell membrane, serving both as a receptor for the preprotein-SecB complex and as an ATP-driven molecular motor driving the stepwise translocation of polypeptide chains across the membrane. This chain is Protein translocase subunit SecA, found in Verminephrobacter eiseniae (strain EF01-2).